The chain runs to 201 residues: Recombination protein RecR (201 aa).

The segment at 60-75 (CSCCGNVDTSDPCTIC) adopts a C4-type zinc-finger fold. Positions 83–178 (ATLIVVEDVS…RVTRLAHGVP (96 aa)) constitute a Toprim domain.

Belongs to the RecR family.

In terms of biological role, may play a role in DNA repair. It seems to be involved in an RecBC-independent recombinational process of DNA repair. It may act with RecF and RecO. In Brucella ovis (strain ATCC 25840 / 63/290 / NCTC 10512), this protein is Recombination protein RecR.